Consider the following 156-residue polypeptide: Cyclic pyranopterin monophosphate synthase (156 aa).

Residues 75-77 (LCH) and 111-112 (ME) contribute to the substrate site. Residue Asp126 is part of the active site.

This sequence belongs to the MoaC family. Homohexamer; trimer of dimers.

The catalysed reaction is (8S)-3',8-cyclo-7,8-dihydroguanosine 5'-triphosphate = cyclic pyranopterin phosphate + diphosphate. The protein operates within cofactor biosynthesis; molybdopterin biosynthesis. Functionally, catalyzes the conversion of (8S)-3',8-cyclo-7,8-dihydroguanosine 5'-triphosphate to cyclic pyranopterin monophosphate (cPMP). The sequence is that of Cyclic pyranopterin monophosphate synthase from Erythrobacter litoralis (strain HTCC2594).